Here is a 334-residue protein sequence, read N- to C-terminus: Glucosyltransferase 3 (334 aa).

Residues threonine 16, arginine 179, and serine 249–threonine 254 contribute to the UDP site.

It belongs to the Gtf3 glucosyltransferase family. Homotetramer; a dimer of dimers.

The protein operates within protein modification; protein glycosylation. Required for polymorphic O-glycosylation of the serine-rich repeat protein in this bacteria. Catalyzes the second step in glycosylation by transferring glucose from UDP-glucose to the terminal GlcNAc moiety of the 3-O-(N-acetyl-alpha-D-glucosaminyl)-L-seryl-[protein] resulting from the first glycosylation step. Its function is as follows. Part of the accessory SecA2/SecY2 system specifically required to export GspB, a serine-rich repeat cell wall protein encoded upstream in the same operon. In Streptococcus gordonii, this protein is Glucosyltransferase 3.